The following is a 427-amino-acid chain: Tyrosine--tRNA ligase (427 aa).

Tyr39 is a binding site for L-tyrosine. Positions Pro44–His53 match the 'HIGH' region motif. Positions 178 and 182 each coordinate L-tyrosine. A 'KMSKS' region motif is present at residues Lys238–Thr242. ATP is bound at residue Lys241. The S4 RNA-binding domain occupies Ile360–Gly417.

Belongs to the class-I aminoacyl-tRNA synthetase family. TyrS type 1 subfamily. In terms of assembly, homodimer.

It localises to the cytoplasm. It carries out the reaction tRNA(Tyr) + L-tyrosine + ATP = L-tyrosyl-tRNA(Tyr) + AMP + diphosphate + H(+). Functionally, catalyzes the attachment of tyrosine to tRNA(Tyr) in a two-step reaction: tyrosine is first activated by ATP to form Tyr-AMP and then transferred to the acceptor end of tRNA(Tyr). The polypeptide is Tyrosine--tRNA ligase (Blochmanniella pennsylvanica (strain BPEN)).